The primary structure comprises 1856 residues: DNA-directed RNA polymerase II subunit RPB1 (1856 aa).

C66, C69, C76, H79, C106, C109, C149, and C177 together coordinate Zn(2+). Residues 256–268 (PAVVTFGSAKNQD) form a lid loop region. Positions 314–331 (NCIPGLPTATQKGGRPLK) are rudder loop. Mg(2+) is bound by residues D489, D491, and D493. Residues 827-839 (PSEFFFHAMGGRE) form a bridging helix region. A Glycyl lysine isopeptide (Lys-Gly) (interchain with G-Cter in ubiquitin) cross-link involves residue K1260. The disordered stretch occupies residues 1523–1856 (PTTGGMSPGA…PSSPTYDPNS (334 aa)). Over residues 1587-1856 (SMTSPHYSPT…PSSPTYDPNS (270 aa)) the composition is skewed to low complexity. A run of 27 repeats spans residues 1593-1599 (YSPTSPS), 1600-1606 (YSPTSPA), 1616-1622 (YSPTSPS), 1623-1629 (YSPTSPS), 1630-1636 (YSPTSPS), 1637-1643 (YSPTSPS), 1644-1650 (YSPTSPS), 1651-1657 (YSPTSPS), 1658-1664 (YSPSSPS), 1665-1671 (YSPSSPS), 1672-1678 (YSPSSPR), 1679-1685 (YSPTSPT), 1686-1692 (YSPTSPT), 1693-1699 (YSPTSPT), 1700-1706 (YSPTSPT), 1707-1713 (YSPTSPS), 1720-1726 (YSPSSPK), 1727-1733 (YSPSSPT), 1734-1740 (YSPTSPS), 1741-1747 (YSPTSPQ), 1748-1754 (YSPTSPQ), 1755-1761 (YSPSSPT), 1769-1775 (YNPTSPR), 1782-1788 (YSPTSPT), 1789-1795 (YSPTSPS), 1796-1802 (YTPSSPQ), and 1803-1809 (YSPTSPT). The tract at residues 1593-1816 (YSPTSPSYSP…SPTYTPSPSE (224 aa)) is C-terminal domain (CTD); 28 X 7 AA approximate tandem repeats of Y-[ST]-P-[ST]-S-P-[AGKNQRST]. A 28; approximate repeat occupies 1810–1816 (YTPSPSE).

This sequence belongs to the RNA polymerase beta' chain family. As to quaternary structure, component of the RNA polymerase II (Pol II) complex consisting of 12 subunits. Interacts with sig-7. In terms of processing, the tandem 7 residues repeats in the C-terminal domain (CTD) can be highly phosphorylated. The phosphorylation activates Pol II. Phosphorylation occurs mainly at residues 'Ser-2' and 'Ser-5' of the heptapeptide repeat and starts at the 3- to 4-cell embryonic stage. This phosphorylation also occurs in the early stages of oocyte development and is not detected in oocytes arrested at the meiotic diakinesis stage. In the somatic lineage, phosphorylation at 'Ser-2' is mediated by cdk-12 downstream of cdk-9 whereas in the germline lineage cdk-12 phosphorylates 'Ser-2' independently of cdk-9. Phosphorylation is likely mediated by cdk-7. May be dephosphorylated by fcp-1 in diakinetic oocytes and in 1-cell and 2-cell embryos. Dephosphorylated at 'Ser-5' of the heptapeptide repeats by ssup-72. The phosphorylation state is believed to result from the balanced action of site-specific CTD kinases and phosphatase, and a 'CTD code' that specifies the position of Pol II within the transcription cycle has been proposed. Following transcription stress, the elongating form of RNA polymerase II (RNA pol IIo) is polyubiquitinated via 'Lys-63'-linkages on Lys-1260 at DNA damage sites without leading to degradation: ubiquitination promotes RNA pol IIo backtracking to allow access by the transcription-coupled nucleotide excision repair (TC-NER) machinery. Subsequent DEF1-dependent polyubiquitination by the elongin complex via 'Lys-48'-linkages may lead to proteasome-mediated degradation; presumably at stalled RNA pol II where TC-NER has failed, to halt global transcription and enable 'last resort' DNA repair pathways.

It localises to the nucleus. The protein localises to the chromosome. The catalysed reaction is RNA(n) + a ribonucleoside 5'-triphosphate = RNA(n+1) + diphosphate. Functionally, DNA-dependent RNA polymerase catalyzes the transcription of DNA into RNA using the four ribonucleoside triphosphates as substrates. Largest and catalytic component of RNA polymerase II which synthesizes mRNA precursors and many functional non-coding RNAs. Forms the polymerase active center together with the second largest subunit. Pol II is the central component of the basal RNA polymerase II transcription machinery. It is composed of mobile elements that move relative to each other. RPB1 is part of the core element with the central large cleft, the clamp element that moves to open and close the cleft and the jaws that are thought to grab the incoming DNA template. At the start of transcription, a single-stranded DNA template strand of the promoter is positioned within the central active site cleft of Pol II. A bridging helix emanates from RPB1 and crosses the cleft near the catalytic site and is thought to promote translocation of Pol II by acting as a ratchet that moves the RNA-DNA hybrid through the active site by switching from straight to bent conformations at each step of nucleotide addition. During transcription elongation, Pol II moves on the template as the transcript elongates. Elongation is influenced by the phosphorylation status of the C-terminal domain (CTD) of Pol II largest subunit (RPB1), which serves as a platform for assembly of factors that regulate transcription initiation, elongation, termination and mRNA processing. Involved in the transcription of several genes including those involved in embryogenesis. The chain is DNA-directed RNA polymerase II subunit RPB1 from Caenorhabditis elegans.